The following is an 82-amino-acid chain: Ranatensin (82 aa).

The N-terminal stretch at 1 to 27 (MTTIPAIGILPIDFLTILLLFSFISHS) is a signal peptide. A propeptide spanning residues 28–47 (VCVEFAEDAGELDKSNAFRR) is cleaved from the precursor. Met58 bears the Methionine amide mark. Residues 62–82 (SLSDDTEQATMYSSRFVESTS) constitute a propeptide that is removed on maturation.

The protein belongs to the bombesin/neuromedin-B/ranatensin family. In terms of tissue distribution, expressed by the skin glands.

The protein resides in the secreted. This is Ranatensin from Lithobates pipiens (Northern leopard frog).